The chain runs to 137 residues: Nucleoside diphosphate kinase (137 aa).

Residues K9, F57, R85, T91, R102, and N112 each coordinate ATP. The active-site Pros-phosphohistidine intermediate is H115.

This sequence belongs to the NDK family. As to quaternary structure, homotetramer. Requires Mg(2+) as cofactor.

The protein localises to the cytoplasm. The catalysed reaction is a 2'-deoxyribonucleoside 5'-diphosphate + ATP = a 2'-deoxyribonucleoside 5'-triphosphate + ADP. The enzyme catalyses a ribonucleoside 5'-diphosphate + ATP = a ribonucleoside 5'-triphosphate + ADP. Its function is as follows. Major role in the synthesis of nucleoside triphosphates other than ATP. The ATP gamma phosphate is transferred to the NDP beta phosphate via a ping-pong mechanism, using a phosphorylated active-site intermediate. The sequence is that of Nucleoside diphosphate kinase from Campylobacter jejuni subsp. doylei (strain ATCC BAA-1458 / RM4099 / 269.97).